Here is a 503-residue protein sequence, read N- to C-terminus: Maturase K (503 aa).

The protein belongs to the intron maturase 2 family. MatK subfamily.

Its subcellular location is the plastid. It localises to the chloroplast. Usually encoded in the trnK tRNA gene intron. Probably assists in splicing its own and other chloroplast group II introns. This is Maturase K from Rosa rugosa (Rugosa rose).